The chain runs to 356 residues: MEESELTQNETEELKASVSAVEFIHIAQRDLEQCLFADSLVTVSDSGRELGDFSVSVTKASYNEELCYLLHANSHGTIDDVPCGTSIVAYISRKLEILEENHHEYVKLEKKTVDRKIHIVRQDDQLVVDRVISEREGVKTQTLKFPLSSLDGFVSEASNFLLLRIMARQKIVPENMTFLSLDADSGLSKSVYKALGWQKQMVGEDLVDIFGIERTIYSANLSSATWHCFFMPDGHLASRVQLGSPAVMKLLHLPFLLDGVIKTFFFLVEKDKIPVMEKKPLIWEEDMELYSKFLDRKEELKADYSSYLRQHPELKALLADFLQFLLLRKPQDVFSFARDFFAPFASQSPPGKSQEF.

This sequence belongs to the CATIP family. In terms of tissue distribution, expressed in tissues rich in motile cilia.

It is found in the nucleus. The protein resides in the cytoplasm. The protein localises to the cell membrane. It localises to the cytoskeleton. In terms of biological role, plays a role in primary ciliogenesis by modulating actin polymerization. The polypeptide is Ciliogenesis-associated TTC17-interacting protein (catip) (Danio rerio (Zebrafish)).